A 474-amino-acid chain; its full sequence is RNA-binding protein Nova-1 (474 aa).

Residues 1–12 (MAAAPIQQNGTH) show a composition bias toward polar residues. Residues 1 to 43 (MAAAPIQQNGTHTGVPIDLDPPDSRKRPLEAPPEAGSTKRTNT) are disordered. The short motif at 26–42 (KRPLEAPPEAGSTKRTN) is the Bipartite nuclear localization signal element. KH domains lie at 48 to 115 (QYFL…HGFI), 146 to 212 (IKQV…VELI), and 396 to 463 (KDVV…QYLI). Positions 394-474 (GSKDVVEIAV…QRITYEQGVR (81 aa)) are required for RNA binding.

Interacts with PTBP2; the interaction is direct.

The protein resides in the nucleus. Functionally, functions to regulate alternative splicing in neurons by binding pre-mRNA in a sequence-specific manner to activate exon inclusion or exclusion. It binds specifically to the sequences 5'-YCAY-3' and regulates splicing in only a subset of regulated exons. Binding to an exonic 5'-YCAY-3' cluster changes the protein complexes assembled on pre-mRNA, blocking U1 snRNP binding and exon inclusion, whereas binding to an intronic 5'-YCAY-3' cluster enhances spliceosome assembly and exon inclusion. Binding to 5'-YCAY-3' clusters results in a local and asymmetric action to regulate spliceosome assembly and alternative splicing in neurons. Binding to an exonic 5'-YCAY-3' cluster changed the protein complexes assembled on pre-mRNA, blocking U1 snRNP (small nuclear ribonucleoprotein) binding and exon inclusion, whereas binding to an intronic 5'-YCAY-3' cluster enhanced spliceosome assembly and exon inclusion. With NOVA1, they perform unique biological functions in different brain areas and cell types. Autoregulates its own expression by acting as a splicing repressor. Acts to activate the inclusion of exon E3A in the glycine receptor alpha-2 chain and of exon E9 in gamma-aminobutyric-acid receptor gamma-2 subunit via a distal downstream UCAU-rich intronic splicing enhancer. Acts to regulate a novel glycine receptor alpha-2 chain splice variant (alpha-2N) in developing spinal cord. The chain is RNA-binding protein Nova-1 from Rattus norvegicus (Rat).